Consider the following 422-residue polypeptide: Killer cell immunoglobulin-like receptor 3DL1 (422 aa).

Positions 1 to 21 (MMFEFLSLLCSGFFLVQRMSA) are cleaved as a signal peptide. The Extracellular segment spans residues 22 to 329 (HMGSYDKPFL…KNLHIQIGLL (308 aa)). 3 consecutive Ig-like C2-type domains span residues 42 to 100 (GQNV…HHQY), 135 to 202 (GENV…YNHS), and 237 to 300 (EQNM…FKNS). Residue N44 is glycosylated (N-linked (GlcNAc...) asparagine). An intrachain disulfide couples C49 to C95. Residue N137 is glycosylated (N-linked (GlcNAc...) asparagine). The cysteines at positions 142 and 195 are disulfide-linked. Residues N200 and N239 are each glycosylated (N-linked (GlcNAc...) asparagine). C244 and C293 are joined by a disulfide. N-linked (GlcNAc...) asparagine glycosylation occurs at N299. The chain crosses the membrane as a helical span at residues 330-350 (VTMVLVIVVIIIIIIIIIIII). Over 351-422 (YYYYFSKKSS…DTVVYTEVMI (72 aa)) the chain is Cytoplasmic.

The protein belongs to the immunoglobulin superfamily.

The protein resides in the cell membrane. Its function is as follows. Receptor on natural killer (NK) cells. Inhibits the activity of NK cells thus preventing cell lysis. The sequence is that of Killer cell immunoglobulin-like receptor 3DL1 (Kir3dl1) from Rattus norvegicus (Rat).